Here is a 610-residue protein sequence, read N- to C-terminus: T-cell immunomodulatory protein (610 aa).

The N-terminal stretch at 1-32 is a signal peptide; the sequence is MAAGLLPSARAVLALLFLGLALLSVGPAPAQA. N-linked (GlcNAc...) asparagine glycans are attached at residues Asn35, Asn94, Asn123, Asn138, Asn145, Asn150, Asn175, and Asn241. An FG-GAP 1; atypical repeat occupies 98–135; that stretch reads LVTSVVPGDYDGDSQMDVLLTYFPQNHSNNELGAVIFW. An FG-GAP 2; atypical repeat occupies 153-183; that stretch reads FHDQPLIMDFNGDLIPDVFAITNESSQPQIL. The stretch at 256–291 is one FG-GAP 3; atypical repeat; sequence VVGQSAFADFDGDGHMDHLLPGCEDKDCQKSAIYLM. N-linked (GlcNAc...) asparagine glycans are attached at residues Asn351, Asn369, and Asn480. The helical transmembrane segment at 564 to 584 threads the bilayer; the sequence is IVLLTAVALTGVCVFILAIIA.

The protein belongs to the TIP family. In terms of assembly, interacts with RUVBL1, RUVBL2 and alpha-tubulin.

It is found in the secreted. The protein resides in the cell membrane. Its function is as follows. Modulator of T-cell function. Has a protective effect in graft versus host disease model. The polypeptide is T-cell immunomodulatory protein (Rattus norvegicus (Rat)).